Reading from the N-terminus, the 343-residue chain is Twinfilin (343 aa).

ADF-H domains are found at residues 4-139 and 177-312; these read QTGI…KHKV and GINC…EELH. A disordered region spans residues 314-343; that stretch reads RKLNLRPQFSKPKGPPSRGAKRLTKPQAVE.

Belongs to the actin-binding proteins ADF family. Twinfilin subfamily. Interacts with G-actin; ADP-actin form.

It is found in the cytoplasm. Its subcellular location is the cytoskeleton. The protein resides in the cell cortex. Actin-binding protein involved in motile and morphological processes. Inhibits actin polymerization, likely by sequestering G-actin. The sequence is that of Twinfilin (twf) from Anopheles gambiae (African malaria mosquito).